The following is a 477-amino-acid chain: 3-isopropylmalate dehydratase large subunit (477 aa).

Cys358, Cys419, and Cys422 together coordinate [4Fe-4S] cluster.

It belongs to the aconitase/IPM isomerase family. LeuC type 1 subfamily. As to quaternary structure, heterodimer of LeuC and LeuD. It depends on [4Fe-4S] cluster as a cofactor.

It catalyses the reaction (2R,3S)-3-isopropylmalate = (2S)-2-isopropylmalate. It participates in amino-acid biosynthesis; L-leucine biosynthesis; L-leucine from 3-methyl-2-oxobutanoate: step 2/4. Catalyzes the isomerization between 2-isopropylmalate and 3-isopropylmalate, via the formation of 2-isopropylmaleate. The polypeptide is 3-isopropylmalate dehydratase large subunit (Acinetobacter baylyi (strain ATCC 33305 / BD413 / ADP1)).